Here is a 172-residue protein sequence, read N- to C-terminus: Adenine phosphoribosyltransferase (172 aa).

The protein belongs to the purine/pyrimidine phosphoribosyltransferase family. In terms of assembly, homodimer.

The protein resides in the cytoplasm. It catalyses the reaction AMP + diphosphate = 5-phospho-alpha-D-ribose 1-diphosphate + adenine. It participates in purine metabolism; AMP biosynthesis via salvage pathway; AMP from adenine: step 1/1. Catalyzes a salvage reaction resulting in the formation of AMP, that is energically less costly than de novo synthesis. The sequence is that of Adenine phosphoribosyltransferase from Gloeothece citriformis (strain PCC 7424) (Cyanothece sp. (strain PCC 7424)).